We begin with the raw amino-acid sequence, 144 residues long: Large ribosomal subunit protein uL13 (144 aa).

It belongs to the universal ribosomal protein uL13 family. In terms of assembly, part of the 50S ribosomal subunit.

This protein is one of the early assembly proteins of the 50S ribosomal subunit, although it is not seen to bind rRNA by itself. It is important during the early stages of 50S assembly. The protein is Large ribosomal subunit protein uL13 of Mycoplasmopsis synoviae (strain 53) (Mycoplasma synoviae).